An 880-amino-acid chain; its full sequence is Pyruvate, phosphate dikinase (880 aa).

Residues 1-348 (MNKLIYYFGN…LYILQTRTAK (348 aa)) are N-terminal. R97 is a binding site for ATP. The segment at 349 to 405 (RTAIAAINIAVQMVKEKLISKEQALMRIDPESLNQLLHTRIDYSKGLTSIAEGLPAS) is linker 1. Residues 406–503 (PGAATGIVVF…VIKQGDIITI (98 aa)) are central. T458 is modified (phosphothreonine; by PDRP1). Residue H460 is the Tele-phosphohistidine intermediate of the active site. The segment at 504–538 (DGGSGKIFLGEMPLIQPTFSEESKLILDWADEISS) is linker 2. Positions 539 to 880 (LKVRANAETV…AAQAKIKQGS (342 aa)) are C-terminal. R566, R622, E750, G771, T772, N773, and D774 together coordinate substrate. E750 lines the Mg(2+) pocket. D774 serves as a coordination point for Mg(2+). The Proton donor role is filled by C836.

It belongs to the PEP-utilizing enzyme family. As to quaternary structure, homodimer. Mg(2+) is required as a cofactor. Phosphorylation of Thr-458 in the dark inactivates the enzyme. Dephosphorylation upon light stimulation reactivates the enzyme.

The catalysed reaction is pyruvate + phosphate + ATP = phosphoenolpyruvate + AMP + diphosphate + H(+). Its activity is regulated as follows. Activated by light-induced dephosphorylation. Inhibited by dark-induced phosphorylation. Both reactions are catalyzed by PDRP1. Catalyzes the reversible phosphorylation of pyruvate and phosphate. The sequence is that of Pyruvate, phosphate dikinase (ppdK) from Rickettsia prowazekii (strain Madrid E).